The following is a 123-amino-acid chain: Small ribosomal subunit protein uS12 (123 aa).

D89 carries the post-translational modification 3-methylthioaspartic acid.

Belongs to the universal ribosomal protein uS12 family. In terms of assembly, part of the 30S ribosomal subunit. Contacts proteins S8 and S17. May interact with IF1 in the 30S initiation complex.

Its function is as follows. With S4 and S5 plays an important role in translational accuracy. In terms of biological role, interacts with and stabilizes bases of the 16S rRNA that are involved in tRNA selection in the A site and with the mRNA backbone. Located at the interface of the 30S and 50S subunits, it traverses the body of the 30S subunit contacting proteins on the other side and probably holding the rRNA structure together. The combined cluster of proteins S8, S12 and S17 appears to hold together the shoulder and platform of the 30S subunit. This chain is Small ribosomal subunit protein uS12, found in Gluconacetobacter diazotrophicus (strain ATCC 49037 / DSM 5601 / CCUG 37298 / CIP 103539 / LMG 7603 / PAl5).